The primary structure comprises 396 residues: RNA binding protein fox-1 homolog 1 (396 aa).

The segment at methionine 1–histidine 119 is disordered. Polar residues predominate over residues proline 67 to glycine 86. Residues threonine 87–aspartate 98 are compositionally biased toward low complexity. Residues glycine 99–lysine 112 show a composition bias toward polar residues. The 77-residue stretch at lysine 116–alanine 192 folds into the RRM domain. Residues arginine 316 and alanine 337 each carry the asymmetric dimethylarginine modification. Position 387 is an omega-N-methylarginine (arginine 387).

As to quaternary structure, binds to the C-terminus of ATXN2. Detected in brain (at protein level). Detected in heart, brain, neurons, skeletal muscle and embryo.

It localises to the nucleus. The protein resides in the cytoplasm. Its function is as follows. RNA-binding protein that regulates alternative splicing events by binding to 5'-UGCAUGU-3' elements. Prevents binding of U2AF2 to the 3'-splice site. Regulates alternative splicing of tissue-specific exons and of differentially spliced exons during erythropoiesis. The chain is RNA binding protein fox-1 homolog 1 (Rbfox1) from Mus musculus (Mouse).